The following is a 63-amino-acid chain: Trypsin inhibitor 5 (63 aa).

An N-terminal signal peptide occupies residues 1-21 (MASVAESSGVVEVIELISDGG). Positions 22 to 34 (NDLPRKIMSGRHG) are excised as a propeptide. 3 disulfide bridges follow: Cys-37/Cys-54, Cys-44/Cys-56, and Cys-50/Cys-62.

The protein belongs to the protease inhibitor I7 (squash-type serine protease inhibitor) family.

It localises to the secreted. In terms of biological role, inhibits trypsin. This chain is Trypsin inhibitor 5, found in Luffa aegyptiaca (Sponge gourd).